A 626-amino-acid chain; its full sequence is Mitogen-activated protein kinase kinase kinase 3 (626 aa).

Residues D44–Q123 form the PB1 domain. Disordered stretches follow at residues R125–E184 and S218–G273. 4 stretches are compositionally biased toward polar residues: residues T128–S137, P144–Y155, L165–R174, and S219–R247. Residues S147 and S166 each carry the phosphoserine modification. A phosphoserine mark is found at S250 and S312. Basic and acidic residues predominate over residues S250 to V270. Phosphoserine; by SGK1 is present on S337. The residue at position 340 (S340) is a Phosphoserine. The region spanning W362–A622 is the Protein kinase domain. ATP-binding positions include L368 to V376 and K391. The active-site Proton acceptor is the D489.

The protein belongs to the protein kinase superfamily. STE Ser/Thr protein kinase family. MAP kinase kinase kinase subfamily. As to quaternary structure, binds both upstream activators and downstream substrates in multimolecular complexes. Part of a complex with MAP2K3, RAC1 and CCM2. Interacts with MAP2K5 and SPAG9. Mg(2+) serves as cofactor. Phosphorylation at Ser-166 and Ser-337 by SGK1 inhibits its activity.

The catalysed reaction is L-seryl-[protein] + ATP = O-phospho-L-seryl-[protein] + ADP + H(+). It carries out the reaction L-threonyl-[protein] + ATP = O-phospho-L-threonyl-[protein] + ADP + H(+). Activated by phosphorylation on Thr-530. In terms of biological role, component of a protein kinase signal transduction cascade. Mediates activation of the NF-kappa-B, AP1 and DDIT3 transcriptional regulators. In Mus musculus (Mouse), this protein is Mitogen-activated protein kinase kinase kinase 3 (Map3k3).